The chain runs to 218 residues: Large ribosomal subunit protein uL3 (218 aa).

This sequence belongs to the universal ribosomal protein uL3 family. In terms of assembly, part of the 50S ribosomal subunit. Forms a cluster with proteins L14 and L19.

Functionally, one of the primary rRNA binding proteins, it binds directly near the 3'-end of the 23S rRNA, where it nucleates assembly of the 50S subunit. In Syntrophus aciditrophicus (strain SB), this protein is Large ribosomal subunit protein uL3.